Reading from the N-terminus, the 215-residue chain is Tricarboxylate transporter ALT9 (215 aa).

Solcar repeat units lie at residues 18–106 and 111–197; these read TTVV…LAPM and CGVS…VVRL. 3 helical membrane-spanning segments follow: residues 19–39, 112–132, and 182–202; these read TVVGNMVAGMCAGVAESVLVL, GVSTSVVAGALAGVITVYCTM, and VAGAIAFTLYEEVVRLTGFLV.

It belongs to the mitochondrial carrier (TC 2.A.29) family.

The protein resides in the mitochondrion inner membrane. The protein operates within mycotoxin biosynthesis. Tricarboxylate transporter; part of the gene cluster that mediates the biosynthesis of the host-selective toxins (HSTs) AAL-toxins, sphinganine-analog mycotoxins responsible for Alternaria stem canker on tomato by the tomato pathotype. The biosynthesis starts with the polyketide synthase ALT1-catalyzed C-16 carbon chain assembly from one starter acetyl-CoA unit with malonyl-CoA extender units. ALT1 also selectively transfers methyl groups at the first and the third cycle of chain elongation for AAL toxin. The C-16 polyketide chain is released from the enzyme by a nucleophilic attack of a carbanion, which is derived from R-carbon of glycin by decarboxylation, on the carbonyl carbon of polyketide acyl chain. This step is probably catalyzed by a pyridoxal 5'-phosphate-dependent aminoacyl transferase ALT4. The respective functions of the other enzymes encoded by the cluster have still to be elucidated. The sphingosine N-acyltransferase-like protein ALT7 seems not to act as a resistance/self-tolerance factor against the toxin in the toxin biosynthetic gene cluster, contrary to what is expected. This Alternaria alternata (Alternaria rot fungus) protein is Tricarboxylate transporter ALT9.